Here is a 111-residue protein sequence, read N- to C-terminus: Universal stress protein B (111 aa).

A run of 2 helical transmembrane segments spans residues 1–21 (MIST…NMAR) and 90–110 (FLLT…LMIW).

This sequence belongs to the universal stress protein B family.

Its subcellular location is the cell inner membrane. This Salmonella arizonae (strain ATCC BAA-731 / CDC346-86 / RSK2980) protein is Universal stress protein B.